We begin with the raw amino-acid sequence, 144 residues long: Cytochrome c'' (144 aa).

A signal peptide spans 1 to 20 (MKIKTIIAVFGVLFSAHALA). 4 residues coordinate heme c: Cys-69, Cys-72, His-73, and His-115. Cys-116 and Cys-124 are disulfide-bonded.

Monomer. Binds 1 heme c group covalently per subunit. The heme is low-spin in the oxidized state but switches to a high-spin form upon reduction, due to the dissociation of one of the axial histidines, His-115.

The chain is Cytochrome c'' (cycA) from Methylophilus methylotrophus (Bacterium W3A1).